Here is a 409-residue protein sequence, read N- to C-terminus: Imidazolonepropionase (409 aa).

Residues His78 and His80 each coordinate Fe(3+). His78 and His80 together coordinate Zn(2+). 4-imidazolone-5-propanoate is bound by residues Arg87, Tyr150, and His183. Tyr150 lines the N-formimidoyl-L-glutamate pocket. His248 provides a ligand contact to Fe(3+). His248 serves as a coordination point for Zn(2+). Gln251 provides a ligand contact to 4-imidazolone-5-propanoate. Fe(3+) is bound at residue Asp323. Zn(2+) is bound at residue Asp323. Asn325 and Gly327 together coordinate N-formimidoyl-L-glutamate. Thr328 serves as a coordination point for 4-imidazolone-5-propanoate.

It belongs to the metallo-dependent hydrolases superfamily. HutI family. The cofactor is Zn(2+). It depends on Fe(3+) as a cofactor.

The protein localises to the cytoplasm. The enzyme catalyses 4-imidazolone-5-propanoate + H2O = N-formimidoyl-L-glutamate. It functions in the pathway amino-acid degradation; L-histidine degradation into L-glutamate; N-formimidoyl-L-glutamate from L-histidine: step 3/3. Catalyzes the hydrolytic cleavage of the carbon-nitrogen bond in imidazolone-5-propanoate to yield N-formimidoyl-L-glutamate. It is the third step in the universal histidine degradation pathway. The chain is Imidazolonepropionase from Mesorhizobium japonicum (strain LMG 29417 / CECT 9101 / MAFF 303099) (Mesorhizobium loti (strain MAFF 303099)).